Here is an 860-residue protein sequence, read N- to C-terminus: Transcription factor E2F8 (860 aa).

Disordered stretches follow at residues 1–27 and 38–57; these read MENQ…PSSK and DLGP…GEPW. Phosphoserine is present on residues Ser-71 and Ser-102. 2 DNA-binding regions span residues 113 to 182 and 261 to 347; these read RKEK…TWHG and RKDK…KWTG. 3 disordered regions span residues 407-433, 532-616, and 745-803; these read RRKI…PPVP, LTPP…PKED, and QMSA…QPVP. A phosphoserine mark is found at Ser-412 and Ser-416. Composition is skewed to polar residues over residues 412-429 and 542-554; these read SAPS…SQNS and VCPT…TGSK. The span at 555–565 shows a compositional bias: basic and acidic residues; sequence DPTDAPAEKTA.

The protein belongs to the E2F/DP family. As to quaternary structure, interacts with HIF1A. Homodimer and heterodimer: mainly forms homodimers and, to a lesser extent, heterodimers with E2F8. Dimerization is important for DNA-binding. Highly expressed in liver, skin, thymus and testis. Expressed in trophoblast giant cells throughout placenta development (at protein level).

It localises to the nucleus. In terms of biological role, atypical E2F transcription factor that participates in various processes such as angiogenesis and polyploidization of specialized cells. Mainly acts as a transcription repressor that binds DNA independently of DP proteins and specifically recognizes the E2 recognition site 5'-TTTC[CG]CGC-3'. Directly represses transcription of classical E2F transcription factors such as E2F1: component of a feedback loop in S phase by repressing the expression of E2F1, thereby preventing p53/TP53-dependent apoptosis. Plays a key role in polyploidization of cells in placenta and liver by regulating the endocycle, probably by repressing genes promoting cytokinesis and antagonizing action of classical E2F proteins (E2F1, E2F2 and/or E2F3). Required for placental development by promoting polyploidization of trophoblast giant cells. Acts as a promoter of sprouting angiogenesis, possibly by acting as a transcription activator: associates with HIF1A, recognizes and binds the VEGFA promoter, which is different from canonical E2 recognition site, and activates expression of the VEGFA gene. This is Transcription factor E2F8 (E2f8) from Mus musculus (Mouse).